The following is a 192-amino-acid chain: tRNA (pseudouridine(54)-N(1))-methyltransferase (192 aa).

Positions 127 and 181 each coordinate S-adenosyl-L-methionine.

Belongs to the methyltransferase superfamily. TrmY family. Homodimer.

The protein resides in the cytoplasm. The enzyme catalyses pseudouridine(54) in tRNA + S-adenosyl-L-methionine = N(1)-methylpseudouridine(54) in tRNA + S-adenosyl-L-homocysteine + H(+). Specifically catalyzes the N1-methylation of pseudouridine at position 54 (Psi54) in tRNAs. This Methanocella arvoryzae (strain DSM 22066 / NBRC 105507 / MRE50) protein is tRNA (pseudouridine(54)-N(1))-methyltransferase.